The primary structure comprises 537 residues: Tyrosine-protein kinase Fyn (537 aa).

G2 carries the N-myristoyl glycine lipid modification. Residues C3 and C6 are each lipidated (S-palmitoyl cysteine). Positions 14–35 (LTEERDGSLNQSSGYRYGTDPT) are disordered. Phosphoserine is present on residues S21 and S26. The region spanning 82–143 (TGVTLFVALY…PSNYVAPVDS (62 aa)) is the SH3 domain. The SH2 domain occupies 149 to 246 (WYFGKLGRKD…GLCCRLVVPC (98 aa)). The residue at position 185 (Y185) is a Phosphotyrosine. The Protein kinase domain occupies 271–524 (LQLIKRLGNG…YLQGFLEDYF (254 aa)). ATP is bound by residues 277–285 (LGNGQFGEV) and K299. Residue D390 is the Proton acceptor of the active site. Y420 bears the Phosphotyrosine; by autocatalysis mark. Position 531 is a phosphotyrosine (Y531).

The protein belongs to the protein kinase superfamily. Tyr protein kinase family. SRC subfamily. In terms of assembly, interacts (via its SH3 domain) with PIK3R1 and PRMT8. Interacts with FYB1, PAG1, and SH2D1A. Interacts with CD79A (tyrosine-phosphorylated form); the interaction increases FYN activity. Interacts (via SH2 domain) with CSF1R (tyrosine phosphorylated). Interacts with TOM1L1 (phosphorylated form). Interacts with KDR (tyrosine phosphorylated). Interacts (via SH3 domain) with KLHL2 (via N-terminus). Interacts with SH2D1A and SLAMF1. Interacts with ITCH; the interaction phosphorylates ITCH and negatively regulates its activity. Interacts with FASLG. Interacts with RUNX3. Interacts with KIT. Interacts with EPHA8; possible downstream effector of EPHA8 in regulation of cell adhesion. Interacts with PTK2/FAK1; this interaction leads to PTK2/FAK1 phosphorylation and activation. Interacts with CAV1; this interaction couples integrins to the Ras-ERK pathway. Interacts with UNC119. Interacts (via SH2 domain) with PTPRH (phosphorylated form). Interacts with PTPRO (phosphorylated form). Interacts with PTPRB (phosphorylated form). Interacts with FYB2. Interacts with DSCAM. Interacts with SKAP1 and FYB1; this interaction promotes the phosphorylation of CLNK. Interacts with NEDD9; in the presence of PTK2. The cofactor is Mn(2+). In terms of processing, autophosphorylated at Tyr-420. Phosphorylation on the C-terminal tail at Tyr-531 by CSK maintains the enzyme in an inactive state. PTPRC/CD45 dephosphorylates Tyr-531 leading to activation. Dephosphorylation at Tyr-420 by PTPN2 negatively regulates T-cell receptor signaling. Phosphorylated at tyrosine residues, which can be enhanced by NTN1. Palmitoylated. Palmitoylation at Cys-3 and Cys-6, probably by ZDHHC21, regulates subcellular location. As to expression, detected in spinal cord oligodendrocytes (at protein level).

The protein resides in the cytoplasm. Its subcellular location is the nucleus. It is found in the cell membrane. It localises to the perikaryon. It catalyses the reaction L-tyrosyl-[protein] + ATP = O-phospho-L-tyrosyl-[protein] + ADP + H(+). Its activity is regulated as follows. Inhibited by phosphorylation of Tyr-531 by leukocyte common antigen and activated by dephosphorylation of this site. Non-receptor tyrosine-protein kinase that plays a role in many biological processes including regulation of cell growth and survival, cell adhesion, integrin-mediated signaling, cytoskeletal remodeling, cell motility, immune response and axon guidance. Inactive FYN is phosphorylated on its C-terminal tail within the catalytic domain. Following activation by PKA, the protein subsequently associates with PTK2/FAK1, allowing PTK2/FAK1 phosphorylation, activation and targeting to focal adhesions. Involved in the regulation of cell adhesion and motility through phosphorylation of CTNNB1 (beta-catenin) and CTNND1 (delta-catenin). Regulates cytoskeletal remodeling by phosphorylating several proteins including the actin regulator WAS and the microtubule-associated proteins MAP2 and MAPT. Promotes cell survival by phosphorylating AGAP2/PIKE-A and preventing its apoptotic cleavage. Participates in signal transduction pathways that regulate the integrity of the glomerular slit diaphragm (an essential part of the glomerular filter of the kidney) by phosphorylating several slit diaphragm components including NPHS1, KIRREL1 and TRPC6. Plays a role in neural processes by phosphorylating DPYSL2, a multifunctional adapter protein within the central nervous system, ARHGAP32, a regulator for Rho family GTPases implicated in various neural functions, and SNCA, a small pre-synaptic protein. Involved in reelin signaling by mediating phosphorylation of DAB1 following reelin (RELN)-binding to its receptor. Participates in the downstream signaling pathways that lead to T-cell differentiation and proliferation following T-cell receptor (TCR) stimulation. Phosphorylates PTK2B/PYK2 in response to T-cell receptor activation. Also participates in negative feedback regulation of TCR signaling through phosphorylation of PAG1, thereby promoting interaction between PAG1 and CSK and recruitment of CSK to lipid rafts. CSK maintains LCK and FYN in an inactive form. Promotes CD28-induced phosphorylation of VAV1. In mast cells, phosphorylates CLNK after activation of immunoglobulin epsilon receptor signaling. Can also promote CD244-mediated NK cell activation. The protein is Tyrosine-protein kinase Fyn of Rattus norvegicus (Rat).